A 1028-amino-acid chain; its full sequence is Pro-apoptotic serine protease nma111 (1028 aa).

The disordered stretch occupies residues methionine 1 to valine 49. Polar residues predominate over residues serine 32–asparagine 43. The serine protease stretch occupies residues valine 82–aspartate 266. Residues histidine 120, aspartate 151, and serine 233 each act as charge relay system in the active site. PDZ domains lie at glutamine 289 to glutamine 374 and valine 876 to aspartate 957. The disordered stretch occupies residues glutamine 983–glutamate 1028. Basic and acidic residues predominate over residues valine 990–isoleucine 1001. The segment covering alanine 1012–glutamate 1028 has biased composition (acidic residues).

Belongs to the peptidase S1C family.

It localises to the nucleus. Nuclear serine protease which mediates apoptosis. In Aspergillus niger (strain ATCC MYA-4892 / CBS 513.88 / FGSC A1513), this protein is Pro-apoptotic serine protease nma111 (nma111).